A 489-amino-acid polypeptide reads, in one-letter code: Sphingolipid C9-methyltransferase (489 aa).

The next 2 membrane-spanning stretches (helical) occupy residues 29–49 (GAKN…PLFV) and 59–79 (TFIF…WTVL). S-adenosyl-L-methionine is bound by residues 202–203 (YT), 239–247 (LLDLGCGWG), 265–270 (TLGKNQ), and 295–296 (YR).

It belongs to the CFA/CMAS family.

It localises to the membrane. It carries out the reaction a (4E,8E)-4-sphinga-4,8-dienine ceramide + S-adenosyl-L-methionine = a 9-methyl-(4E,8E)-sphinga-4,8-dienine ceramide + S-adenosyl-L-homocysteine + H(+). It participates in lipid metabolism; sphingolipid metabolism. Catalyzes methylation of the sphingoid base component of glucosylceramides (GluCers) at the C9-position. Sphingolipid C9-methylation requires 4,8-desaturated ceramides as substrates. Glucosylceramides play important roles in growth, differentiation and pathogenicity. The methyl group at the C9-position distinguishes fungal glucosylceramides from those of plants and animals, and may thus play a role in host-pathogen interactions enabling the host to recognize the fungal attack and initiate specific defense responses. The sequence is that of Sphingolipid C9-methyltransferase from Komagataella phaffii (strain GS115 / ATCC 20864) (Yeast).